The sequence spans 263 residues: Elongation factor Ts (263 aa).

The interval 82 to 85 is involved in Mg(2+) ion dislocation from EF-Tu; sequence TDFV. Positions 221–251 are enriched in low complexity; it reads APPAVVEAPVAETPEPAVAETPEAKPAATES. The segment at 221–263 is disordered; it reads APPAVVEAPVAETPEPAVAETPEAKPAATESKPAKSKSAKKKK. Residues 254 to 263 show a composition bias toward basic residues; the sequence is AKSKSAKKKK.

The protein belongs to the EF-Ts family.

The protein resides in the cytoplasm. In terms of biological role, associates with the EF-Tu.GDP complex and induces the exchange of GDP to GTP. It remains bound to the aminoacyl-tRNA.EF-Tu.GTP complex up to the GTP hydrolysis stage on the ribosome. The protein is Elongation factor Ts of Cyanothece sp. (strain PCC 7425 / ATCC 29141).